The following is a 226-amino-acid chain: ATP synthase F(0) complex subunit a (226 aa).

The next 6 helical transmembrane spans lie at 6–26 (FASF…IVLF), 68–88 (WALM…LGLL), 97–117 (QLSM…ITGF), 138–158 (IPML…ALAV), 164–184 (ITAG…LMSI), and 189–209 (ALIT…VAMI).

Belongs to the ATPase A chain family. Component of the ATP synthase complex composed at least of ATP5F1A/subunit alpha, ATP5F1B/subunit beta, ATP5MC1/subunit c (homooctomer), MT-ATP6/subunit a, MT-ATP8/subunit 8, ATP5ME/subunit e, ATP5MF/subunit f, ATP5MG/subunit g, ATP5MK/subunit k, ATP5MJ/subunit j, ATP5F1C/subunit gamma, ATP5F1D/subunit delta, ATP5F1E/subunit epsilon, ATP5PF/subunit F6, ATP5PB/subunit b, ATP5PD/subunit d, ATP5PO/subunit OSCP. ATP synthase complex consists of a soluble F(1) head domain (subunits alpha(3) and beta(3)) - the catalytic core - and a membrane F(0) domain - the membrane proton channel (subunits c, a, 8, e, f, g, k and j). These two domains are linked by a central stalk (subunits gamma, delta, and epsilon) rotating inside the F1 region and a stationary peripheral stalk (subunits F6, b, d, and OSCP). Interacts with DNAJC30; interaction is direct.

The protein localises to the mitochondrion inner membrane. It carries out the reaction H(+)(in) = H(+)(out). Subunit a, of the mitochondrial membrane ATP synthase complex (F(1)F(0) ATP synthase or Complex V) that produces ATP from ADP in the presence of a proton gradient across the membrane which is generated by electron transport complexes of the respiratory chain. ATP synthase complex consist of a soluble F(1) head domain - the catalytic core - and a membrane F(1) domain - the membrane proton channel. These two domains are linked by a central stalk rotating inside the F(1) region and a stationary peripheral stalk. During catalysis, ATP synthesis in the catalytic domain of F(1) is coupled via a rotary mechanism of the central stalk subunits to proton translocation. With the subunit c (ATP5MC1), forms the proton-conducting channel in the F(0) domain, that contains two crucial half-channels (inlet and outlet) that facilitate proton movement from the mitochondrial intermembrane space (IMS) into the matrix. Protons are taken up via the inlet half-channel and released through the outlet half-channel, following a Grotthuss mechanism. The sequence is that of ATP synthase F(0) complex subunit a from Bos indicus (Zebu).